The following is a 350-amino-acid chain: Probable V-type proton ATPase subunit d 2 (350 aa).

Belongs to the V-ATPase V0D/AC39 subunit family. V-ATPase is a heteromultimeric enzyme made up of two complexes: the ATP-hydrolytic V1 complex and the proton translocation V0 complex. The V1 complex consists of three catalytic AB heterodimers that form a heterohexamer, three peripheral stalks each consisting of EG heterodimers, one central rotor including subunits D and F, and the regulatory subunits C and H. The proton translocation complex V0 consists of the proton transport subunit a, a ring of proteolipid subunits c9c'', rotary subunit d, subunits e and f, and the accessory subunits VhaAC45 and ATP6AP2.

Functionally, subunit of the V0 complex of vacuolar(H+)-ATPase (V-ATPase), a multisubunit enzyme composed of a peripheral complex (V1) that hydrolyzes ATP and a membrane integral complex (V0) that translocates protons. V-ATPase is responsible for acidifying and maintaining the pH of intracellular compartments and in some cell types, is targeted to the plasma membrane, where it is responsible for acidifying the extracellular environment. May play a role in coupling of proton transport and ATP hydrolysis. The protein is Probable V-type proton ATPase subunit d 2 (VhaAC39-2) of Drosophila melanogaster (Fruit fly).